Consider the following 195-residue polypeptide: Large ribosomal subunit protein bL27c (195 aa).

Residues 1–60 (MASMAFTLVGAFKGMSLSSPCHSSSSASFLRADRVSLSVGGGVGMGVPMTMPVRRLTIQM) constitute a chloroplast transit peptide.

Belongs to the bacterial ribosomal protein bL27 family. In terms of assembly, part of the 50S ribosomal subunit.

It localises to the plastid. It is found in the chloroplast. The sequence is that of Large ribosomal subunit protein bL27c (RPL27) from Oryza sativa subsp. japonica (Rice).